Reading from the N-terminus, the 97-residue chain is Co-chaperonin GroES (97 aa).

This sequence belongs to the GroES chaperonin family. Heptamer of 7 subunits arranged in a ring. Interacts with the chaperonin GroEL.

The protein resides in the cytoplasm. Its function is as follows. Together with the chaperonin GroEL, plays an essential role in assisting protein folding. The GroEL-GroES system forms a nano-cage that allows encapsulation of the non-native substrate proteins and provides a physical environment optimized to promote and accelerate protein folding. GroES binds to the apical surface of the GroEL ring, thereby capping the opening of the GroEL channel. The protein is Co-chaperonin GroES of Pseudomonas savastanoi pv. phaseolicola (strain 1448A / Race 6) (Pseudomonas syringae pv. phaseolicola (strain 1448A / Race 6)).